The sequence spans 255 residues: MMEQLRKKEQHIAKVVGECSTQGAVSVSFSTVQLAKGTCLEKLRPWMLRYRCSSRTGYAEWLADRAGAQSVRMAELLELYWDLIAVVEARFAVVPSEVEEERFYRRFQAHVVRRVGRRITCTARGRACAEDKYPDFQQIGDMYGAVGDEQGVHLYKWVQSSRRLLVLMDERAAGRVDLKRWLVMMMELVDGARMLRGCQALQVYVSREDLVNVKDLLKNLNWIGGELVQNVGDRWSDDEAMVWSDERYVVIRFDC.

This sequence belongs to the ODC antizyme family. Interacts with ODC and thereby sterically blocks ODC homodimerization.

In terms of biological role, ornithine decarboxylase (ODC) antizyme protein that negatively regulates ODC activity and intracellular polyamine biosynthesis in response to increased intracellular polyamine levels. Binds to ODC monomers, inhibiting the assembly of the functional ODC homodimer, and targets the monomers for ubiquitin-independent proteolytic destruction by the 26S proteasome. This is Ornithine decarboxylase antizyme (OAZ1) from Eremothecium gossypii (strain ATCC 10895 / CBS 109.51 / FGSC 9923 / NRRL Y-1056) (Yeast).